Here is a 684-residue protein sequence, read N- to C-terminus: Frizzled-8 (684 aa).

The first 27 residues, 1-27 (MEWGYLLEVTSLLAALAVLQRSSGAAA), serve as a signal peptide directing secretion. Residues 28-271 (ASAKELACQE…NPFFSQDERA (244 aa)) are Extracellular-facing. An FZ domain is found at 30–151 (AKELACQEIT…GNPDTLCMDY (122 aa)). 5 cysteine pairs are disulfide-bonded: C35-C96, C43-C89, C80-C118, C107-C148, and C111-C135. The N-linked (GlcNAc...) asparagine glycan is linked to N49. A hexadecanoate-binding site is contributed by 71–78 (QFWPLVEI). The tract at residues 95-100 (ICLEDY) is wnt-binding. Residues 147–152 (LCMDYN) are wnt-binding. N152 is a glycosylation site (N-linked (GlcNAc...) asparagine). Positions 155–222 (DLTTAAPSPP…KARPPGGGAA (68 aa)) are disordered. Pro residues predominate over residues 161 to 175 (PSPPRRLPPPQPGEQ). 2 stretches are compositionally biased toward low complexity: residues 176 to 186 (PPSGSGHSRPP) and 199 to 222 (GSGDTAAAPPSRGGKARPPGGGAA). A helical transmembrane segment spans residues 272–292 (FTVFWIGLWSVLCFVSTFATV). At 293–308 (STFLIDMERFKYPERP) the chain is on the cytoplasmic side. A helical transmembrane segment spans residues 309-329 (IIFLSACYLFVSVGYLVRLVA). Residues 330–393 (GHEKVACSGG…RYETTGPALC (64 aa)) are Extracellular-facing. The chain crosses the membrane as a helical span at residues 394 to 414 (TVVFLLVYFFGMASSIWWVIL). Residues 415-436 (SLTWFLAAGMKWGNEAIAGYSQ) lie on the Cytoplasmic side of the membrane. A helical transmembrane segment spans residues 437 to 457 (YFHLAAWLVPSVKSIAVLALS). At 458-480 (SVDGDPVAGICYVGNQSLDNLRG) the chain is on the extracellular side. A glycan (N-linked (GlcNAc...) asparagine) is linked at N472. Residues 481–501 (FVLAPLVIYLFIGTMFLLAGF) traverse the membrane as a helical segment. The Cytoplasmic portion of the chain corresponds to 502–529 (VSLFRIRSVIKQQGGPTKTHKLEKLMIR). The chain crosses the membrane as a helical span at residues 530 to 550 (LGLFTVLYTVPAAVVVACLFY). Topologically, residues 551–581 (EQHNRPRWEATHNCPCLRDLQPDQARRPDYA) are extracellular. The helical transmembrane segment at 582–602 (VFMLKYFMCLVVGITSGVWVW) threads the bilayer. Topologically, residues 603–684 (SGKTLESWRA…YPKQMPLSQV (82 aa)) are cytoplasmic. A Lys-Thr-X-X-X-Trp motif, mediates interaction with the PDZ domain of Dvl family members motif is present at residues 605 to 610 (KTLESW). Gly residues predominate over residues 630–654 (AGGSGPGGGGPGPGGGGGHGGGGGS). Positions 630–655 (AGGSGPGGGGPGPGGGGGHGGGGGSL) are disordered. The short motif at 682-684 (SQV) is the PDZ-binding element.

The protein belongs to the G-protein coupled receptor Fz/Smo family. Component of a Wnt-signaling complex that contains a WNT protein, a FZD protein and LRP5 or LRP6. Interacts directly with LRP5 or LRP6; the interaction is promoted by Wnt-binding and signaling and inhibited by DKK1. Interacts (via the PDZ-binding motif) with GPOC (via its PDZ domain). Interacts with RSPO1 and RSPO3. Interacts with glypican GPC3. In terms of processing, ubiquitinated by ZNRF3, leading to its degradation by the proteasome.

It is found in the membrane. The protein localises to the golgi apparatus. Its subcellular location is the cell membrane. Receptor for Wnt proteins. Component of the Wnt-Fzd-LRP5-LRP6 complex that triggers beta-catenin signaling through inducing aggregation of receptor-ligand complexes into ribosome-sized signalosomes. The beta-catenin canonical signaling pathway leads to the activation of disheveled proteins, inhibition of GSK-3 kinase, nuclear accumulation of beta-catenin and activation of Wnt target genes. A second signaling pathway involving PKC and calcium fluxes has been seen for some family members, but it is not yet clear if it represents a distinct pathway or if it can be integrated in the canonical pathway, as PKC seems to be required for Wnt-mediated inactivation of GSK-3 kinase. Both pathways seem to involve interactions with G-proteins. May be involved in transduction and intercellular transmission of polarity information during tissue morphogenesis and/or in differentiated tissues. Coreceptor along with RYK of Wnt proteins, such as WNT1. This Rattus norvegicus (Rat) protein is Frizzled-8 (Fzd8).